The primary structure comprises 138 residues: Basic phospholipase A2 trimucrotoxin (138 aa).

An N-terminal signal peptide occupies residues 1-16 (MRTLWIVAVLLLGVEG). Intrachain disulfides connect C42–C131, C44–C60, C59–C111, C65–C138, C66–C104, C73–C97, and C91–C102. The Ca(2+) site is built by Y43, G45, and G47. Residue H63 is part of the active site. Ca(2+) is bound at residue D64. The active site involves D105.

It belongs to the phospholipase A2 family. Group II subfamily. D49 sub-subfamily. Homodimer. The cofactor is Ca(2+). As to expression, expressed by the venom gland.

The protein resides in the secreted. The catalysed reaction is a 1,2-diacyl-sn-glycero-3-phosphocholine + H2O = a 1-acyl-sn-glycero-3-phosphocholine + a fatty acid + H(+). In terms of biological role, snake venom phospholipase A2 (PLA2) that displays edema-inducing activities, as well as presynaptic neurotoxicity and low myotoxicity. PLA2 catalyzes the calcium-dependent hydrolysis of the 2-acyl groups in 3-sn-phosphoglycerides. This chain is Basic phospholipase A2 trimucrotoxin, found in Protobothrops mucrosquamatus (Taiwan habu).